The primary structure comprises 170 residues: Bifunctional protein PyrR (170 aa).

Positions 90–102 (LVLIDDVLMSGRT) match the PRPP-binding motif.

This sequence belongs to the purine/pyrimidine phosphoribosyltransferase family. PyrR subfamily.

It catalyses the reaction UMP + diphosphate = 5-phospho-alpha-D-ribose 1-diphosphate + uracil. Its function is as follows. Regulates the transcription of the pyrimidine nucleotide (pyr) operon in response to exogenous pyrimidines. Also displays a weak uracil phosphoribosyltransferase activity which is not physiologically significant. The protein is Bifunctional protein PyrR of Pseudomonas syringae pv. syringae (strain B728a).